The sequence spans 459 residues: Putrescine aminotransferase (459 aa).

Pyridoxal 5'-phosphate contacts are provided by residues 150–151 and glutamine 274; that span reads GT. Residue lysine 300 is modified to N6-(pyridoxal phosphate)lysine. Threonine 332 contributes to the pyridoxal 5'-phosphate binding site.

The protein belongs to the class-III pyridoxal-phosphate-dependent aminotransferase family. Putrescine aminotransferase subfamily. Pyridoxal 5'-phosphate serves as cofactor.

The catalysed reaction is an alkane-alpha,omega-diamine + 2-oxoglutarate = an omega-aminoaldehyde + L-glutamate. It catalyses the reaction putrescine + 2-oxoglutarate = 1-pyrroline + L-glutamate + H2O. It carries out the reaction cadaverine + 2-oxoglutarate = 5-aminopentanal + L-glutamate. It participates in amine and polyamine degradation; putrescine degradation; 4-aminobutanal from putrescine (transaminase route): step 1/1. In terms of biological role, catalyzes the aminotransferase reaction from putrescine to 2-oxoglutarate, leading to glutamate and 4-aminobutanal, which spontaneously cyclizes to form 1-pyrroline. This is the first step in one of two pathways for putrescine degradation, where putrescine is converted into 4-aminobutanoate (gamma-aminobutyrate or GABA) via 4-aminobutanal. Also functions as a cadaverine transaminase in a a L-lysine degradation pathway to succinate that proceeds via cadaverine, glutarate and L-2-hydroxyglutarate. This Escherichia fergusonii (strain ATCC 35469 / DSM 13698 / CCUG 18766 / IAM 14443 / JCM 21226 / LMG 7866 / NBRC 102419 / NCTC 12128 / CDC 0568-73) protein is Putrescine aminotransferase.